Here is a 311-residue protein sequence, read N- to C-terminus: MQAPPPEHCPGVESEEAGKGSACSGCPNQGLCSDPNKKLEDPGKALVVESMKDVKHKLLILSGKGGVGKSTVTSLLTRYLARSNPDSNFGVLDIDICGPSQPRLMGALGESVHQSGYGWSPVGIEDNVCLMSIGFLLGSVDDAIIWRGPKKNGMIRQFLSEVDWGNLDLLLLDTPPGTSDEHLSVVSYLKDDANPESLRAVMVTTPQEVSLLDVRKEINFCKKQNIPIVGVIENMSSFRCGHCGNSSEIFPAKTGGAAAMCAEMGIPLLGSLPLDQQISKACDSGEDLTEFKNVTTEALEGICSKIMASFS.

The disordered stretch occupies residues 1 to 21 (MQAPPPEHCPGVESEEAGKGS). [4Fe-4S] cluster contacts are provided by Cys9, Cys23, Cys26, and Cys32. 63–70 (GKGGVGKS) contributes to the ATP binding site. Residues Cys240 and Cys243 each coordinate [4Fe-4S] cluster.

Belongs to the Mrp/NBP35 ATP-binding proteins family. NUBP1/NBP35 subfamily. Heterotetramer of 2 Nubp1 and 2 Nubp2 chains. The cofactor is [4Fe-4S] cluster.

It localises to the cytoplasm. Its function is as follows. Component of the cytosolic iron-sulfur (Fe/S) protein assembly (CIA) machinery. Required for maturation of extramitochondrial Fe-S proteins. The Nubp1-Nubp2 heterotetramer forms a Fe-S scaffold complex, mediating the de novo assembly of an Fe-S cluster and its transfer to target apoproteins. The sequence is that of Cytosolic Fe-S cluster assembly factor Nubp1 homolog from Drosophila melanogaster (Fruit fly).